The following is a 118-amino-acid chain: Small ribosomal subunit protein uS13 (118 aa).

The segment at 91 to 118 (HRRGLPVRGQRTKTNARTRKGPRKPIKK) is disordered.

The protein belongs to the universal ribosomal protein uS13 family. In terms of assembly, part of the 30S ribosomal subunit. Forms a loose heterodimer with protein S19. Forms two bridges to the 50S subunit in the 70S ribosome.

Its function is as follows. Located at the top of the head of the 30S subunit, it contacts several helices of the 16S rRNA. In the 70S ribosome it contacts the 23S rRNA (bridge B1a) and protein L5 of the 50S subunit (bridge B1b), connecting the 2 subunits; these bridges are implicated in subunit movement. Contacts the tRNAs in the A and P-sites. In Pectobacterium atrosepticum (strain SCRI 1043 / ATCC BAA-672) (Erwinia carotovora subsp. atroseptica), this protein is Small ribosomal subunit protein uS13.